A 673-amino-acid polypeptide reads, in one-letter code: DNA ligase (673 aa).

NAD(+) is bound by residues 33 to 37, 83 to 84, and Glu-117; these read DHQYD and SL. The active-site N6-AMP-lysine intermediate is the Lys-119. Positions 140, 175, 282, and 306 each coordinate NAD(+). Zn(2+)-binding residues include Cys-400, Cys-403, Cys-418, and Cys-424. Residues 592-673 form the BRCT domain; that stretch reads RGSSAISGKT…WVKMVEDARS (82 aa).

The protein belongs to the NAD-dependent DNA ligase family. LigA subfamily. It depends on Mg(2+) as a cofactor. The cofactor is Mn(2+).

The enzyme catalyses NAD(+) + (deoxyribonucleotide)n-3'-hydroxyl + 5'-phospho-(deoxyribonucleotide)m = (deoxyribonucleotide)n+m + AMP + beta-nicotinamide D-nucleotide.. Functionally, DNA ligase that catalyzes the formation of phosphodiester linkages between 5'-phosphoryl and 3'-hydroxyl groups in double-stranded DNA using NAD as a coenzyme and as the energy source for the reaction. It is essential for DNA replication and repair of damaged DNA. This chain is DNA ligase, found in Anaplasma marginale (strain St. Maries).